The primary structure comprises 252 residues: Enolase-phosphatase E1 (252 aa).

Mg(2+) contacts are provided by D14 and E16. Residues 143–144 (SS) and K177 contribute to the substrate site. Residue D202 participates in Mg(2+) binding.

The protein belongs to the HAD-like hydrolase superfamily. MasA/MtnC family. Monomer. It depends on Mg(2+) as a cofactor.

It localises to the cytoplasm. The protein resides in the nucleus. The enzyme catalyses 5-methylsulfanyl-2,3-dioxopentyl phosphate + H2O = 1,2-dihydroxy-5-(methylsulfanyl)pent-1-en-3-one + phosphate. It functions in the pathway amino-acid biosynthesis; L-methionine biosynthesis via salvage pathway; L-methionine from S-methyl-5-thio-alpha-D-ribose 1-phosphate: step 3/6. It participates in amino-acid biosynthesis; L-methionine biosynthesis via salvage pathway; L-methionine from S-methyl-5-thio-alpha-D-ribose 1-phosphate: step 4/6. Its function is as follows. Bifunctional enzyme that catalyzes the enolization of 2,3-diketo-5-methylthiopentyl-1-phosphate (DK-MTP-1-P) into the intermediate 2-hydroxy-3-keto-5-methylthiopentenyl-1-phosphate (HK-MTPenyl-1-P), which is then dephosphorylated to form the acireductone 1,2-dihydroxy-3-keto-5-methylthiopentene (DHK-MTPene). The protein is Enolase-phosphatase E1 of Drosophila persimilis (Fruit fly).